The following is a 485-amino-acid chain: N-succinylglutamate 5-semialdehyde dehydrogenase 2 (485 aa).

Position 221–226 (221–226 (GSAAAG)) interacts with NAD(+). Residues Glu-244 and Cys-279 contribute to the active site.

This sequence belongs to the aldehyde dehydrogenase family. AstD subfamily.

It catalyses the reaction N-succinyl-L-glutamate 5-semialdehyde + NAD(+) + H2O = N-succinyl-L-glutamate + NADH + 2 H(+). It functions in the pathway amino-acid degradation; L-arginine degradation via AST pathway; L-glutamate and succinate from L-arginine: step 4/5. In terms of biological role, catalyzes the NAD-dependent reduction of succinylglutamate semialdehyde into succinylglutamate. This is N-succinylglutamate 5-semialdehyde dehydrogenase 2 from Caulobacter vibrioides (strain ATCC 19089 / CIP 103742 / CB 15) (Caulobacter crescentus).